The chain runs to 348 residues: S-adenosylmethionine-dependent nucleotide dehydratase RSAD2 (348 aa).

The 221-residue stretch at 56–276 (SATPSSVNYH…LERHSSISCL (221 aa)) folds into the Radical SAM core domain. The [4Fe-4S] cluster site is built by Cys70, Cys74, and Cys77.

This sequence belongs to the radical SAM superfamily. RSAD2 family. It depends on [4Fe-4S] cluster as a cofactor. As to expression, expressed at low levels in spleen and head kidney.

The protein resides in the endoplasmic reticulum membrane. Its function is as follows. Interferon-inducible iron-sulfur (4FE-4S) cluster-binding antiviral protein which plays a major role in the cell antiviral state induced by type I and type II interferon. This is S-adenosylmethionine-dependent nucleotide dehydratase RSAD2 from Oncorhynchus mykiss (Rainbow trout).